The primary structure comprises 537 residues: Methionine--tRNA ligase (537 aa).

The short motif at 11 to 21 (AYPNAAPHIGH) is the 'HIGH' region element. The 'KMSKS' region motif lies at 301–305 (KMSKS). Lys-304 is an ATP binding site. The tract at residues 503–537 (PPPTGVFPRYQPSEIEGADPVKSSSKRREHNKRRE) is disordered. A compositionally biased stretch (basic residues) spans 526 to 537 (SSKRREHNKRRE).

This sequence belongs to the class-I aminoacyl-tRNA synthetase family. MetG type 2B subfamily. In terms of assembly, monomer.

It localises to the cytoplasm. The enzyme catalyses tRNA(Met) + L-methionine + ATP = L-methionyl-tRNA(Met) + AMP + diphosphate. Functionally, is required not only for elongation of protein synthesis but also for the initiation of all mRNA translation through initiator tRNA(fMet) aminoacylation. The polypeptide is Methionine--tRNA ligase (Mycobacterium leprae (strain TN)).